A 295-amino-acid polypeptide reads, in one-letter code: Ribosomal protein L11 methyltransferase (295 aa).

S-adenosyl-L-methionine contacts are provided by threonine 139, glycine 166, aspartate 188, and asparagine 231.

This sequence belongs to the methyltransferase superfamily. PrmA family.

The protein localises to the cytoplasm. It carries out the reaction L-lysyl-[protein] + 3 S-adenosyl-L-methionine = N(6),N(6),N(6)-trimethyl-L-lysyl-[protein] + 3 S-adenosyl-L-homocysteine + 3 H(+). In terms of biological role, methylates ribosomal protein L11. The polypeptide is Ribosomal protein L11 methyltransferase (Cyanothece sp. (strain PCC 7425 / ATCC 29141)).